Here is a 545-residue protein sequence, read N- to C-terminus: Metal transporter NRAT1 (545 aa).

12 helical membrane-spanning segments follow: residues 51–71 (FLAH…PSNL), 84–104 (ELLW…TLAA), 128–148 (IFLW…EVLG), 155–175 (ILLK…TLLL), 188–208 (FIIA…LSYL), 234–254 (IALF…ALVL), 278–298 (LAFI…GSIC), 333–353 (VVYA…CTFA), 373–395 (LITR…PSGA), 398–418 (LIIL…IPLL), 437–457 (VVIA…FLVW), and 474–494 (GLIS…VVYL). Positions 516-545 (EAGGTPVVDASAADEDQPAPYRKDLADASM) are disordered. Residues 536-545 (YRKDLADASM) are compositionally biased toward basic and acidic residues.

It belongs to the NRAMP (TC 2.A.55) family. As to expression, expressed at low levels in roots.

It localises to the cell membrane. Its function is as follows. Metal transporter that transports the trivalent cation aluminum (Al(3+)), but does not seem to transport divalent cations such as iron (Fe(2+)), manganese (Mg(2+)) or Cadmium (Cd(2+)). Involved in Al tolerance by taking up Al in root cells, where it is detoxified by chelation with organic acid anions and sequestration into the vacuoles. This is Metal transporter NRAT1 (NRAT1) from Oryza sativa subsp. japonica (Rice).